Reading from the N-terminus, the 575-residue chain is MEHKNIGAEVLQDTYDDQQKWVLDSSLDSRGRVPLRARTGAWRAALFIIAIEFSERLSYFGLATNLVVYLTTILNQDLKMAIRNVNYWSGVTTLMPLLGGFIADAYLGRYATVLVATTIYLMGLVLLTMSWFIPGLKPCHQEVCVEPRKAHEVAFFIAIYLISIGTGGHKPSLESFGADQFDDDHVEERKMKMSFFNWWNVSLCAGILTAVTAVAYIEDRVGWGVAGIILTVVMAISLIIFFIGKPFYRYRTPSGSPLTPILQVFVAAIAKRNLPYPSDPSLLHEVSKTEFTSGRLLCHTEHLKFLDKAAIIEDKNPLALEKQSPWRLLTLTKVEETKLIINVIPIWFSTLAFGICATQASTFFIKQAITMDRHIGGFTVPPASMFTLTALTLIISLTVYEKLLVPLLRSITRNQRGINILQRIGTGMIFSLITMIIAALVEKQRLDRTNNNKPMSVIWLAPQFMVIGFADAFTLVGLQEYFYHQVPDSMRSLGIAFYLSVIGAASFLNNLLITAVDTLAENFSGKSWFGKDLNSSRLDRFYWFLAGVIAANICVFVIVAKRCPYKSVQPSQGLS.

2 helical membrane-spanning segments follow: residues 44–64 (AALF…GLAT) and 88–108 (WSGV…AYLG). At Thr112 the chain carries Phosphothreonine. 10 consecutive transmembrane segments (helical) span residues 113 to 133 (VLVA…SWFI), 153 to 173 (VAFF…KPSL), 195 to 215 (FFNW…TAVA), 223 to 243 (WGVA…IFFI), 339 to 359 (LIIN…CATQ), 375 to 395 (IGGF…TLII), 420 to 440 (ILQR…IAAL), 457 to 477 (VIWL…TLVG), 493 to 513 (LGIA…NLLI), and 541 to 561 (FYWF…IVAK).

Belongs to the major facilitator superfamily. Proton-dependent oligopeptide transporter (POT/PTR) (TC 2.A.17) family. As to expression, expressed in stems, shoots, leaves, flowers and siliques.

Its subcellular location is the membrane. In Arabidopsis thaliana (Mouse-ear cress), this protein is Protein NRT1/ PTR FAMILY 5.6 (NPF5.6).